Here is a 138-residue protein sequence, read N- to C-terminus: Large ribosomal subunit protein uL16 (138 aa).

This sequence belongs to the universal ribosomal protein uL16 family. Part of the 50S ribosomal subunit.

In terms of biological role, binds 23S rRNA and is also seen to make contacts with the A and possibly P site tRNAs. In Acidiphilium cryptum (strain JF-5), this protein is Large ribosomal subunit protein uL16.